Reading from the N-terminus, the 199-residue chain is OPA3-like protein (199 aa).

Positions 98-141 (RSSEKDKKKEEALQNRFKNLEEKLEVQQETINNLTNVIEAIQSS) form a coiled coil.

This sequence belongs to the OPA3 family.

The sequence is that of OPA3-like protein from Dictyostelium discoideum (Social amoeba).